Reading from the N-terminus, the 257-residue chain is PHD finger protein Alfin1 (257 aa).

The disordered stretch occupies residues 145-200; that stretch reads SKDQLTAHNNGSNSKYKSSGKSRQSESQTKGVKMSAPVKEEVDSGEEEEEDDDEQG. Low complexity predominate over residues 153 to 166; that stretch reads NNGSNSKYKSSGKS. The span at 187–199 shows a compositional bias: acidic residues; it reads DSGEEEEEDDDEQ. A PHD-type zinc finger spans residues 200–252; sequence GATCGACGDNYGTDEFWICCDMCEKWFHGKCVKITPAKAEHIKQYKCPGCSIK.

The protein belongs to the Alfin family. In terms of assembly, interacts with H3K4me3 and to a lesser extent with H3K4me2. Predominantly expressed in the roots.

It is found in the nucleus. Functionally, histone-binding component that specifically recognizes H3 tails trimethylated on 'Lys-4' (H3K4me3), which mark transcription start sites of virtually all active genes. Transcriptional regulator that binds specifically to DNA sequences 5'-GNGGTG-3' or 5'-GTGGNG-3', including promoter elements of the salt-inducible PRP2 gene. Plays a role in salinity tolerance. The sequence is that of PHD finger protein Alfin1 (ALFIN-1) from Medicago sativa (Alfalfa).